A 450-amino-acid chain; its full sequence is Equilibrative nucleotide transporter 1 (450 aa).

A run of 11 helical transmembrane segments spans residues 63 to 83 (FAYI…NAFI), 101 to 121 (IFAV…VVFY), 133 to 153 (LGLL…LVYV), 168 to 188 (AAVA…IGVA), 196 to 216 (MQAV…LRIL), 234 to 254 (LYFA…NVAH), 300 to 320 (HGFG…GYIT), 334 to 354 (ILLI…TAVF), 361 to 381 (IAVG…GCLH), 394 to 414 (ILTC…MILA), and 430 to 450 (TVMF…FWVI).

It belongs to the SLC29A/ENT transporter (TC 2.A.57) family. In young seedlings, expressed in root elongation zone, root cortex, root-hair, at the transition to the shoot and cotyledons. Expressed in hydathodes of fully developed leaves and pollen.

The protein resides in the vacuole membrane. Its function is as follows. Nucleoside transporter involved in adenosine transport and required for nucleotide metabolism which influences growth and pollen germination. Has high affinity for adenosine when expressed in a heterologous system (yeast). In Arabidopsis thaliana (Mouse-ear cress), this protein is Equilibrative nucleotide transporter 1 (ENT1).